A 415-amino-acid chain; its full sequence is S-inosyl-L-homocysteine hydrolase (415 aa).

Residues Asp-123 and Glu-148 each coordinate substrate. 149–151 (TTT) contacts NAD(+). Substrate contacts are provided by Lys-178 and Asp-182. Residues Asn-183, 212 to 217 (GYGWCG), Glu-235, 291 to 293 (AGH), and Asn-337 contribute to the NAD(+) site.

This sequence belongs to the adenosylhomocysteinase family. The cofactor is NAD(+).

The protein resides in the cytoplasm. It catalyses the reaction S-inosyl-L-homocysteine + H2O = L-homocysteine + inosine. It participates in amino-acid biosynthesis; S-adenosyl-L-methionine biosynthesis. Catalyzes the hydrolysis of S-inosyl-L-homocysteine (SIH) to L-homocysteine (Hcy) and inosine. Likely functions in a S-adenosyl-L-methionine (SAM) recycling pathway from S-adenosyl-L-homocysteine (SAH) produced from SAM-dependent methylation reactions. Can also catalyze the reverse reaction in vitro, i.e. the synthesis of SIH from Hcy and inosine. This is S-inosyl-L-homocysteine hydrolase from Methanococcus maripaludis (strain DSM 14266 / JCM 13030 / NBRC 101832 / S2 / LL).